The primary structure comprises 415 residues: Amylovoran biosynthesis protein AmsJ (415 aa).

Belongs to the polysaccharide pyruvyl transferase family.

It functions in the pathway glycan metabolism; exopolysaccharide biosynthesis. Its function is as follows. Involved in the biosynthesis of amylovoran which functions as a virulence factor. The sequence is that of Amylovoran biosynthesis protein AmsJ (amsJ) from Erwinia amylovora (Fire blight bacteria).